Reading from the N-terminus, the 170-residue chain is Zinc finger matrin-type protein 5 (170 aa).

A C3H1-type zinc finger spans residues 51 to 79 (EQNKRPCRKFLLTGQCDFGSNCRFSHMSE). Positions 150-170 (PPSLRAPPPGGWPLQPRVQWG) are disordered.

In terms of assembly, component of the U11/U12 snRNPs that are part of the U12-type spliceosome. Not found in the major spliceosome.

Its subcellular location is the nucleus. In Homo sapiens (Human), this protein is Zinc finger matrin-type protein 5 (ZMAT5).